A 532-amino-acid chain; its full sequence is Chaperonin GroEL 2 (532 aa).

ATP-binding positions include 30 to 33, K51, 87 to 91, G415, 479 to 481, and D495; these read TLGP, DGTTT, and NAA.

Belongs to the chaperonin (HSP60) family. As to quaternary structure, forms a cylinder of 14 subunits composed of two heptameric rings stacked back-to-back. Interacts with the co-chaperonin GroES.

It localises to the cytoplasm. The enzyme catalyses ATP + H2O + a folded polypeptide = ADP + phosphate + an unfolded polypeptide.. Its function is as follows. Together with its co-chaperonin GroES, plays an essential role in assisting protein folding. The GroEL-GroES system forms a nano-cage that allows encapsulation of the non-native substrate proteins and provides a physical environment optimized to promote and accelerate protein folding. The polypeptide is Chaperonin GroEL 2 (Vibrio parahaemolyticus serotype O3:K6 (strain RIMD 2210633)).